The sequence spans 490 residues: Alpha-galactosidase (490 aa).

F4–D70 contributes to the NAD(+) binding site. Residue N150 coordinates substrate. Position 171 (C171) interacts with Mn(2+). Catalysis depends on H172, which acts as the Proton donor. Mn(2+) is bound at residue H201. The active-site Proton acceptor is the Y258.

This sequence belongs to the glycosyl hydrolase 4 family. In terms of assembly, homodimer. Mn(2+) is required as a cofactor. It depends on NAD(+) as a cofactor.

It carries out the reaction Hydrolysis of terminal, non-reducing alpha-D-galactose residues in alpha-D-galactosides, including galactose oligosaccharides, galactomannans and galactolipids.. This chain is Alpha-galactosidase (melA), found in Rhizobium meliloti (strain 1021) (Ensifer meliloti).